A 746-amino-acid chain; its full sequence is Mediator of RNA polymerase II transcription subunit 25 (746 aa).

The interval 1–226 (MVPGSEGPAR…PRHMVLVRGL (226 aa)) is interaction with the Mediator complex. Disordered stretches follow at residues 233 to 273 (GSAP…QQYQ) and 298 to 390 (GLGP…PALG). Pro residues predominate over residues 238–251 (PLQPKQPVPLPPAA). The span at 252–262 (PAGATLSTAPQ) shows a compositional bias: low complexity. Pro residues predominate over residues 329–342 (PPGPPGAPKPPPAS). Residues 343–354 (QPSLVSTVAPGP) show a composition bias toward low complexity. An interaction with VP16 region spans residues 389-543 (LGGQQSVSNK…VNGIRQVITN (155 aa)). Residues 395-545 (VSNKLLAWSG…GIRQVITNHK (151 aa)) form an interaction with CREBBP region. The interval 548 to 746 (QQQKLEQQRG…MEDDILMDLI (199 aa)) is disordered. 2 interaction with RARA regions span residues 563–652 (APPG…LLNP) and 639–706 (PGAN…WPAQ). Residues 599 to 610 (AAAGQPQPQGAA) are compositionally biased toward low complexity. Pro residues predominate over residues 611–633 (PAPPGAPQGPPGAAPGPPPPGPL). The LXXLL motif motif lies at 645–649 (LRSLL). Composition is skewed to pro residues over residues 651–663 (NPPP…PPPQ), 672–682 (PGAPALLPPPH), and 690–701 (LGPPLLHPPPAQ). Arg-724 bears the Asymmetric dimethylarginine mark. A compositionally biased stretch (acidic residues) spans 737–746 (MEDDILMDLI).

It belongs to the Mediator complex subunit 25 family. In terms of assembly, component of the Mediator complex, which is composed of MED1, MED4, MED6, MED7, MED8, MED9, MED10, MED11, MED12, MED13, MED13L, MED14, MED15, MED16, MED17, MED18, MED19, MED20, MED21, MED22, MED23, MED24, MED25, MED26, MED27, MED29, MED30, MED31, CCNC, CDK8 and CDC2L6/CDK11. The MED12, MED13, CCNC and CDK8 subunits form a distinct module termed the CDK8 module. Mediator containing the CDK8 module is less active than Mediator lacking this module in supporting transcriptional activation. Individual preparations of the Mediator complex lacking one or more distinct subunits have been variously termed ARC, CRSP, DRIP, PC2, SMCC and TRAP. Interacts with CREBBP. Interacts with ESR1, GR, RARA, RXRA and THRB in a ligand-dependent fashion. Binds the Herpes simplex virus activator VP16.

It is found in the nucleus. Component of the Mediator complex, a coactivator involved in the regulated transcription of nearly all RNA polymerase II-dependent genes. Mediator functions as a bridge to convey information from gene-specific regulatory proteins to the basal RNA polymerase II transcription machinery. Mediator is recruited to promoters by direct interactions with regulatory proteins and serves as a scaffold for the assembly of a functional preinitiation complex with RNA polymerase II and the general transcription factors. Required for RARA/RXRA-mediated transcription. In Bos taurus (Bovine), this protein is Mediator of RNA polymerase II transcription subunit 25 (MED25).